The following is a 153-amino-acid chain: MIMEIRKIGDPILKIKAKKVEKIDEKVKNLVRDMIETMKFSNGVGLAAPQVGESLRIIVVDYEENPIAFINPEILEMDGEVLDYEGCLSVPGVEVPIKRAERIIFKAQDLQGRTKRYKAKGLLARVIQHEVDHLEGILILDRAVEESTLAEEK.

Residues Cys87 and His129 each coordinate Fe cation. The active site involves Glu130. A Fe cation-binding site is contributed by His133.

It belongs to the polypeptide deformylase family. Requires Fe(2+) as cofactor.

It catalyses the reaction N-terminal N-formyl-L-methionyl-[peptide] + H2O = N-terminal L-methionyl-[peptide] + formate. Its function is as follows. Removes the formyl group from the N-terminal Met of newly synthesized proteins. Requires at least a dipeptide for an efficient rate of reaction. N-terminal L-methionine is a prerequisite for activity but the enzyme has broad specificity at other positions. This Dictyoglomus turgidum (strain DSM 6724 / Z-1310) protein is Peptide deformylase.